The sequence spans 454 residues: 3-phosphoshikimate 1-carboxyvinyltransferase (454 aa).

The segment at 1–31 is disordered; sequence MSENHSEGASRPVISRRPAAGLRADHPVHVP. 3-phosphoshikimate-binding residues include lysine 34, serine 35, and arginine 39. Residue lysine 34 coordinates phosphoenolpyruvate. Glycine 107 and arginine 135 together coordinate phosphoenolpyruvate. The 3-phosphoshikimate site is built by serine 180, glutamine 182, aspartate 334, and lysine 361. Glutamine 182 lines the phosphoenolpyruvate pocket. Aspartate 334 serves as the catalytic Proton acceptor. Positions 365 and 409 each coordinate phosphoenolpyruvate.

Belongs to the EPSP synthase family. Monomer.

Its subcellular location is the cytoplasm. The enzyme catalyses 3-phosphoshikimate + phosphoenolpyruvate = 5-O-(1-carboxyvinyl)-3-phosphoshikimate + phosphate. It functions in the pathway metabolic intermediate biosynthesis; chorismate biosynthesis; chorismate from D-erythrose 4-phosphate and phosphoenolpyruvate: step 6/7. Its function is as follows. Catalyzes the transfer of the enolpyruvyl moiety of phosphoenolpyruvate (PEP) to the 5-hydroxyl of shikimate-3-phosphate (S3P) to produce enolpyruvyl shikimate-3-phosphate and inorganic phosphate. The chain is 3-phosphoshikimate 1-carboxyvinyltransferase from Granulibacter bethesdensis (strain ATCC BAA-1260 / CGDNIH1).